The chain runs to 490 residues: Betaine aldehyde dehydrogenase (490 aa).

Residues Thr26, Ile27, and Asp93 each contribute to the K(+) site. 150–152 is an NAD(+) binding site; the sequence is GAW. Lys162 functions as the Charge relay system in the catalytic mechanism. 176–179 provides a ligand contact to NAD(+); it reads KPSE. K(+) is bound at residue Val180. 230-233 is a binding site for NAD(+); it reads GVAS. K(+) is bound at residue Leu246. The active-site Proton acceptor is Glu252. NAD(+) is bound by residues Gly254, Cys286, and Glu387. The active-site Nucleophile is Cys286. Residue Cys286 is modified to Cysteine sulfenic acid (-SOH). Residues Lys457 and Gly460 each contribute to the K(+) site. The active-site Charge relay system is the Glu464.

Belongs to the aldehyde dehydrogenase family. Dimer of dimers. K(+) is required as a cofactor.

The enzyme catalyses betaine aldehyde + NAD(+) + H2O = glycine betaine + NADH + 2 H(+). It functions in the pathway amine and polyamine biosynthesis; betaine biosynthesis via choline pathway; betaine from betaine aldehyde: step 1/1. Functionally, involved in the biosynthesis of the osmoprotectant glycine betaine. Catalyzes the irreversible oxidation of betaine aldehyde to the corresponding acid. The chain is Betaine aldehyde dehydrogenase from Escherichia coli (strain K12 / DH10B).